The sequence spans 347 residues: GMP reductase (347 aa).

108–131 (ADFDKMKQILALSPSLKFICIDVA) contacts NADP(+). K(+) contacts are provided by G181 and G183. C186 (thioimidate intermediate) is an active-site residue. 216–239 (IVSDGGCSVPGDVAKAFGGGADFV) is a binding site for NADP(+).

The protein belongs to the IMPDH/GMPR family. GuaC type 1 subfamily. In terms of assembly, homotetramer.

It catalyses the reaction IMP + NH4(+) + NADP(+) = GMP + NADPH + 2 H(+). Its function is as follows. Catalyzes the irreversible NADPH-dependent deamination of GMP to IMP. It functions in the conversion of nucleobase, nucleoside and nucleotide derivatives of G to A nucleotides, and in maintaining the intracellular balance of A and G nucleotides. This is GMP reductase from Yersinia pestis bv. Antiqua (strain Antiqua).